Here is a 293-residue protein sequence, read N- to C-terminus: Succinate--CoA ligase [ADP-forming] subunit alpha (293 aa).

CoA contacts are provided by residues 21–24 (TGKQ), Lys-47, and 99–101 (ITE). A substrate-binding site is contributed by Tyr-162. Residue His-249 is the Tele-phosphohistidine intermediate of the active site.

It belongs to the succinate/malate CoA ligase alpha subunit family. As to quaternary structure, heterotetramer of two alpha and two beta subunits.

The catalysed reaction is succinate + ATP + CoA = succinyl-CoA + ADP + phosphate. It carries out the reaction GTP + succinate + CoA = succinyl-CoA + GDP + phosphate. It functions in the pathway carbohydrate metabolism; tricarboxylic acid cycle; succinate from succinyl-CoA (ligase route): step 1/1. Its function is as follows. Succinyl-CoA synthetase functions in the citric acid cycle (TCA), coupling the hydrolysis of succinyl-CoA to the synthesis of either ATP or GTP and thus represents the only step of substrate-level phosphorylation in the TCA. The alpha subunit of the enzyme binds the substrates coenzyme A and phosphate, while succinate binding and nucleotide specificity is provided by the beta subunit. The sequence is that of Succinate--CoA ligase [ADP-forming] subunit alpha from Methanothermobacter thermautotrophicus (strain ATCC 29096 / DSM 1053 / JCM 10044 / NBRC 100330 / Delta H) (Methanobacterium thermoautotrophicum).